Here is a 647-residue protein sequence, read N- to C-terminus: Threonine--tRNA ligase (647 aa).

Residues 1–60 form the TGS domain; sequence MQVTIEDQSLEAAAGEACGQVLSRAVSGKRLKNAVACLVDGQPRDLAFPLPEDAHELALV. The tract at residues 242 to 533 is catalytic; sequence DHRKLGAQLD…LIEHTAGALP (292 aa). The Zn(2+) site is built by Cys334, His385, and His510.

It belongs to the class-II aminoacyl-tRNA synthetase family. As to quaternary structure, homodimer. Zn(2+) is required as a cofactor.

Its subcellular location is the cytoplasm. It carries out the reaction tRNA(Thr) + L-threonine + ATP = L-threonyl-tRNA(Thr) + AMP + diphosphate + H(+). Its function is as follows. Catalyzes the attachment of threonine to tRNA(Thr) in a two-step reaction: L-threonine is first activated by ATP to form Thr-AMP and then transferred to the acceptor end of tRNA(Thr). Also edits incorrectly charged L-seryl-tRNA(Thr). This Solidesulfovibrio magneticus (strain ATCC 700980 / DSM 13731 / RS-1) (Desulfovibrio magneticus) protein is Threonine--tRNA ligase.